A 149-amino-acid polypeptide reads, in one-letter code: Large ribosomal subunit protein bL9 (149 aa).

The protein belongs to the bacterial ribosomal protein bL9 family.

Its function is as follows. Binds to the 23S rRNA. The polypeptide is Large ribosomal subunit protein bL9 (Haemophilus ducreyi (strain 35000HP / ATCC 700724)).